The following is a 121-amino-acid chain: Small ribosomal subunit protein uS13 (121 aa).

Residues 91–121 (HRMSLPVRGQRTRTNARTRRGSRKTVAGRKK) are disordered. The segment covering 100–121 (QRTRTNARTRRGSRKTVAGRKK) has biased composition (basic residues).

It belongs to the universal ribosomal protein uS13 family. In terms of assembly, part of the 30S ribosomal subunit. Forms a loose heterodimer with protein S19. Forms two bridges to the 50S subunit in the 70S ribosome.

Its function is as follows. Located at the top of the head of the 30S subunit, it contacts several helices of the 16S rRNA. In the 70S ribosome it contacts the 23S rRNA (bridge B1a) and protein L5 of the 50S subunit (bridge B1b), connecting the 2 subunits; these bridges are implicated in subunit movement. Contacts the tRNAs in the A and P-sites. The polypeptide is Small ribosomal subunit protein uS13 (Prochlorococcus marinus (strain MIT 9312)).